A 423-amino-acid chain; its full sequence is Glucose-1-phosphate adenylyltransferase (423 aa).

Alpha-D-glucose 1-phosphate-binding positions include Y108, G173, 188-189, and S207; that span reads EK.

Belongs to the bacterial/plant glucose-1-phosphate adenylyltransferase family. In terms of assembly, homotetramer.

The enzyme catalyses alpha-D-glucose 1-phosphate + ATP + H(+) = ADP-alpha-D-glucose + diphosphate. It functions in the pathway glycan biosynthesis; glycogen biosynthesis. Functionally, involved in the biosynthesis of ADP-glucose, a building block required for the elongation reactions to produce glycogen. Catalyzes the reaction between ATP and alpha-D-glucose 1-phosphate (G1P) to produce pyrophosphate and ADP-Glc. This chain is Glucose-1-phosphate adenylyltransferase, found in Francisella tularensis subsp. holarctica (strain FTNF002-00 / FTA).